The sequence spans 602 residues: Aspartate--tRNA(Asp/Asn) ligase (602 aa).

Glu176 serves as a coordination point for L-aspartate. The segment at 200-203 (QQFK) is aspartate. 2 residues coordinate L-aspartate: Arg222 and His452. Residue 222-224 (RDE) participates in ATP binding. Glu490 serves as a coordination point for ATP. An L-aspartate-binding site is contributed by Arg497. An ATP-binding site is contributed by 542 to 545 (GIDR).

It belongs to the class-II aminoacyl-tRNA synthetase family. Type 1 subfamily. In terms of assembly, homodimer.

It localises to the cytoplasm. The enzyme catalyses tRNA(Asx) + L-aspartate + ATP = L-aspartyl-tRNA(Asx) + AMP + diphosphate. Its function is as follows. Aspartyl-tRNA synthetase with relaxed tRNA specificity since it is able to aspartylate not only its cognate tRNA(Asp) but also tRNA(Asn). Reaction proceeds in two steps: L-aspartate is first activated by ATP to form Asp-AMP and then transferred to the acceptor end of tRNA(Asp/Asn). This is Aspartate--tRNA(Asp/Asn) ligase from Rickettsia bellii (strain OSU 85-389).